The primary structure comprises 492 residues: Cytoplasmic dynein 1 light intermediate chain 2 (492 aa).

ATP is bound at residue 61–68; that stretch reads GEDGSGKT. Disordered regions lie at residues 187-206, 371-423, and 437-492; these read PEEG…SGSD, AKQP…KNNA, and LSKK…ENEA. A Phosphoserine modification is found at Ser-194. Over residues 371–381 the composition is skewed to polar residues; sequence AKQPATPTRAS. Ser-383 and Ser-391 each carry phosphoserine. Arg-397 is modified (omega-N-methylarginine). Thr-441 bears the Phosphothreonine mark. Residues Ser-443 and Ser-446 each carry the phosphoserine modification. The segment covering 452 to 469 has biased composition (polar residues); the sequence is VQSTAKKSGQKTVLSNVQ. Residues 471–480 show a composition bias toward basic and acidic residues; sequence ELDRMTRKPD. Positions 482–492 are enriched in polar residues; that stretch reads MVTNSSTENEA.

Belongs to the dynein light intermediate chain family. Homodimer. The cytoplasmic dynein 1 complex consists of two catalytic heavy chains (HCs) and a number of non-catalytic subunits presented by intermediate chains (ICs), light intermediate chains (LICs) and light chains (LCs); the composition seems to vary in respect to the IC, LIC and LC composition. The heavy chain homodimer serves as a scaffold for the probable homodimeric assembly of the respective non-catalytic subunits. The ICs and LICs bind directly to the HC dimer and the LCs assemble on the IC dimer. Interacts with DYNC1H1; DYNC1LI1 and DYNC1LI2 bind mutually exclusive to DYNC1H.

It is found in the cytoplasm. Its subcellular location is the cytoskeleton. Acts as one of several non-catalytic accessory components of the cytoplasmic dynein 1 complex that are thought to be involved in linking dynein to cargos and to adapter proteins that regulate dynein function. Cytoplasmic dynein 1 acts as a motor for the intracellular retrograde motility of vesicles and organelles along microtubules. May play a role in binding dynein to membranous organelles or chromosomes. This is Cytoplasmic dynein 1 light intermediate chain 2 (DYNC1LI2) from Pongo abelii (Sumatran orangutan).